The following is a 122-amino-acid chain: Small ribosomal subunit protein uS13 (122 aa).

Residues 95-122 are disordered; that stretch reads GLPVRGQRTHTNARTRKGPAKSIAGKKK.

The protein belongs to the universal ribosomal protein uS13 family. Part of the 30S ribosomal subunit. Forms a loose heterodimer with protein S19. Forms two bridges to the 50S subunit in the 70S ribosome.

Its function is as follows. Located at the top of the head of the 30S subunit, it contacts several helices of the 16S rRNA. In the 70S ribosome it contacts the 23S rRNA (bridge B1a) and protein L5 of the 50S subunit (bridge B1b), connecting the 2 subunits; these bridges are implicated in subunit movement. Contacts the tRNAs in the A and P-sites. The protein is Small ribosomal subunit protein uS13 of Nitrobacter winogradskyi (strain ATCC 25391 / DSM 10237 / CIP 104748 / NCIMB 11846 / Nb-255).